The sequence spans 381 residues: Diguanylate cyclase DosC (381 aa).

His-98 serves as a coordination point for heme. Residues 325–381 enclose the GGDEF domain; the sequence is TPLSVLIIDVDKFKEINDTWGHNTGDEILRKVSFLSQKRLVKSKILGAGSSRKLAVS. Asp-333 lines the Mg(2+) pocket. Substrate contacts are provided by Asn-341 and Asp-350.

The cofactor is heme. Requires Mg(2+) as cofactor.

It carries out the reaction 2 GTP = 3',3'-c-di-GMP + 2 diphosphate. It participates in purine metabolism; 3',5'-cyclic di-GMP biosynthesis. Functionally, globin-coupled heme-based oxygen sensor protein displaying diguanylate cyclase (DGC) activity in response to oxygen availability. Thus, catalyzes the synthesis of cyclic diguanylate (c-di-GMP) via the condensation of 2 GTP molecules. Cyclic-di-GMP is a second messenger which controls cell surface-associated traits in bacteria. The protein is Diguanylate cyclase DosC (dosC) of Shigella flexneri.